The primary structure comprises 258 residues: Indole-3-glycerol phosphate synthase (258 aa).

It belongs to the TrpC family.

It catalyses the reaction 1-(2-carboxyphenylamino)-1-deoxy-D-ribulose 5-phosphate + H(+) = (1S,2R)-1-C-(indol-3-yl)glycerol 3-phosphate + CO2 + H2O. Its pathway is amino-acid biosynthesis; L-tryptophan biosynthesis; L-tryptophan from chorismate: step 4/5. In Geobacillus thermodenitrificans (strain NG80-2), this protein is Indole-3-glycerol phosphate synthase.